We begin with the raw amino-acid sequence, 391 residues long: Phosphoglycerate kinase (391 aa).

Substrate-binding positions include 21–23, Arg-36, 59–62, Arg-114, and Arg-147; these read DLN and HLGR. ATP is bound by residues Lys-198, Glu-315, and 344 to 347; that span reads GGDT.

Belongs to the phosphoglycerate kinase family. Monomer.

The protein localises to the cytoplasm. The catalysed reaction is (2R)-3-phosphoglycerate + ATP = (2R)-3-phospho-glyceroyl phosphate + ADP. It functions in the pathway carbohydrate degradation; glycolysis; pyruvate from D-glyceraldehyde 3-phosphate: step 2/5. This Haemophilus ducreyi (strain 35000HP / ATCC 700724) protein is Phosphoglycerate kinase.